The sequence spans 875 residues: Peptidyl-glycine alpha-amidating monooxygenase B (875 aa).

Residues 1 to 39 (MDMASLISSLLVLFLIFQNSCYCFRSPLSVFKRYEESTR) form the signal peptide. The interval 3-394 (MASLISSLLV…KREEEEVLNQ (392 aa)) is peptidylglycine alpha-hydroxylating monooxygenase. Residues 40-763 (SLSNDCLGTT…PSVVQESSAG (724 aa)) lie on the Intragranular side of the membrane. 5 cysteine pairs are disulfide-bonded: C45–C184, C79–C124, C112–C129, C225–C332, and C291–C313. H105 and H106 together coordinate Cu(2+). The Cu(2+) site is built by H170, H240, H242, and M312. The tract at residues 395–716 (DVHLEEDTDW…SPSKAEHRSV (322 aa)) is peptidyl-alpha-hydroxyglycine alpha-amidating lyase. R430 is an a protein binding site. N-linked (GlcNAc...) asparagine glycosylation occurs at N465. 3 NHL repeats span residues 467 to 508 (SKVL…VGAE), 516 to 561 (LGRA…FSPN), and 569 to 613 (GEET…FHAK). 2 disulfides stabilise this stretch: C530–C551 and C598–C609. Y550 and R602 together coordinate a protein. N662 carries N-linked (GlcNAc...) asparagine glycosylation. One copy of the NHL 4 repeat lies at 666-709 (GDILDTFIPARKNFEMPHDIAAGDDGTVYVGDAHANAVWKFSPS). Residues 735–755 (HMRSRPKTNESVGQQTQEKPS) are disordered. N743 carries N-linked (GlcNAc...) asparagine glycosylation. The segment covering 743-755 (NESVGQQTQEKPS) has biased composition (polar residues). A helical transmembrane segment spans residues 764-787 (VSFVLIITLLIIPVVVLIAIAIFI). The Cytoplasmic segment spans residues 788-875 (RWRKVRMYGG…APPIPPVSSS (88 aa)). The interval 837-875 (KGFDRLSTEGSDQEKDDDDDGSDSEEEYSAPPIPPVSSS) is disordered. Acidic residues predominate over residues 850-864 (EKDDDDDGSDSEEEY).

The protein in the C-terminal section; belongs to the peptidyl-alpha-hydroxyglycine alpha-amidating lyase family. This sequence in the N-terminal section; belongs to the copper type II ascorbate-dependent monooxygenase family. Monomer. Requires Zn(2+) as cofactor. It depends on Cu(2+) as a cofactor.

It is found in the cytoplasmic vesicle. Its subcellular location is the secretory vesicle membrane. It catalyses the reaction a [peptide]-C-terminal glycine + 2 L-ascorbate + O2 = a [peptide]-C-terminal (2S)-2-hydroxyglycine + 2 monodehydro-L-ascorbate radical + H2O. The catalysed reaction is a [peptide]-C-terminal (2S)-2-hydroxyglycine = a [peptide]-C-terminal amide + glyoxylate. Bifunctional enzyme that catalyzes amidation of the C-terminus of proteins. Alpha-amidation is present at the C-terminus of many endocrine hormones and neuropeptides and is required for their activity. C-terminal amidation also takes place in response to protein fragmentation triggered by oxidative stress, promoting degradation of amidated protein fragments by the proteasome. Alpha-amidation involves two sequential reactions, both of which are catalyzed by separate catalytic domains of the enzyme. The first step, catalyzed by peptidyl alpha-hydroxylating monooxygenase (PHM) domain, is the copper-, ascorbate-, and O2- dependent stereospecific hydroxylation (with S stereochemistry) at the alpha-carbon (C-alpha) of the C-terminal glycine of the peptidylglycine substrate. The second step, catalyzed by the peptidylglycine amidoglycolate lyase (PAL) domain, is the zinc-dependent cleavage of the N-C-alpha bond, producing the alpha-amidated peptide and glyoxylate. The sequence is that of Peptidyl-glycine alpha-amidating monooxygenase B (pam-b) from Xenopus laevis (African clawed frog).